The sequence spans 349 residues: Aspartate carbamoyltransferase catalytic subunit (349 aa).

Residues arginine 59 and threonine 60 each coordinate carbamoyl phosphate. Position 87 (lysine 87) interacts with L-aspartate. Carbamoyl phosphate contacts are provided by arginine 109, histidine 142, and glutamine 145. 2 residues coordinate L-aspartate: arginine 182 and arginine 253. Glycine 294 and proline 295 together coordinate carbamoyl phosphate.

It belongs to the aspartate/ornithine carbamoyltransferase superfamily. ATCase family. As to quaternary structure, heterododecamer (2C3:3R2) of six catalytic PyrB chains organized as two trimers (C3), and six regulatory PyrI chains organized as three dimers (R2).

It catalyses the reaction carbamoyl phosphate + L-aspartate = N-carbamoyl-L-aspartate + phosphate + H(+). The protein operates within pyrimidine metabolism; UMP biosynthesis via de novo pathway; (S)-dihydroorotate from bicarbonate: step 2/3. Catalyzes the condensation of carbamoyl phosphate and aspartate to form carbamoyl aspartate and inorganic phosphate, the committed step in the de novo pyrimidine nucleotide biosynthesis pathway. This Synechococcus sp. (strain CC9902) protein is Aspartate carbamoyltransferase catalytic subunit.